The primary structure comprises 666 residues: MKETIFEIFVDDLMDSSYDEEDFERGDAGIDDKKAFMKNQFRTISLAEKNSLVQRTMKLYEAGALNKRVMDKATLVEQNTYIPSHKEIDKYENDTVPIPVAKPKNPHVDEPAFNVNEIMGRADKYIGTFNLGMVWVYPYLDDPPIKFGTRTLEHKFEYDLLSPANDSTMLNIENKLYPSISHYLIVRVAQTMPGFENVDKAYGVISDGPNRFFSVADSESRLMNLEQTVFSKEKTFLLQKAIRNKFDQRKFKDILIATGDKVLVYAPLKLTDEARRLKYQGLAKPINIVTESNAYRKETTNFLEKIRPTILPEDVIFSNNNAFKTSLEYDEFMEMFMVEKVKDISFTIKCVQVFCKHKDLPFSLTKCFVKKVLESFYGECTPVNYISGSAKKQYPYRFEEALSAQFQIRSRKETSFSMSTKTANLIFNKILETLFNLENVMKNGELPHIGGQNEIPMYATLFKIALMDSQWLLSKRNNKDLKFDTKSKNNNNIISAIINVISILHMDLSDNKKVGNCIYDSIDNIVDDVDIKIATSILTGKIQPLEEITVAKSKGSLRAQIIAEEEIRFGEEIEAEFNDEEVVEEGDVIEEEELDEEGGEEEEGIDYADELPEFDEEAYYEGVVRTITGHFESLGLDVENGIEDKIRKEAQKIEKIGNRLKINFYA.

This is an uncharacterized protein from Invertebrate iridescent virus 6 (IIV-6).